We begin with the raw amino-acid sequence, 258 residues long: Envelope glycoprotein L (258 aa).

An N-terminal signal peptide occupies residues 1–31 (MYECMFFSHRLTIGFYIPLIVLTTMSSLSES). The region spanning 36 to 243 (QKTACTVAAI…ILYQASLSGP (208 aa)) is the gL betaherpesvirus-type domain. The cysteines at positions 145 and 150 are disulfide-linked.

It belongs to the herpesviridae glycoprotein L (gL) family. Betaherpesvirinae gL subfamily. Interacts with glycoprotein H (gH); this interaction is necessary for the correct processing and cell surface expression of gH. Forms the envelope pentamer complex (PC) composed of gH, gL, UL128, UL130, and UL131A. The pentamer interacts with host NRP2. Forms the envelope trimer complex composed of gH, gL, and gO. The trimer interacts with host PDGFRA.

It is found in the virion membrane. It localises to the host cell membrane. The protein resides in the host Golgi apparatus. Its subcellular location is the host trans-Golgi network. In terms of biological role, the heterodimer glycoprotein H-glycoprotein L is required for the fusion of viral and plasma membranes leading to virus entry into the host cell. Acts as a functional inhibitor of gH and maintains gH in an inhibited form. Upon binding to host integrins, gL dissociates from gH leading to activation of the viral fusion glycoproteins gB and gH. In human cytomegalovirus, forms two distincts complexes to mediate viral entry, a trimer and a pentamer at the surface of the virion envelope. The gH-gL-gO trimer is required for infection in fibroblasts by interacting with host PDGFRA. The gH-gL-UL128-UL130-UL131A pentamer is essential for viral entry in epithelial, endothelial and myeloid cells via interaction with host NRP2. The protein is Envelope glycoprotein L of Guinea pig cytomegalovirus (strain 22122) (GPCMV).